Consider the following 193-residue polypeptide: Potassium-transporting ATPase KdpC subunit (193 aa).

A helical membrane pass occupies residues 7–27 (PLVVLFVVLNAVTGLAYPAVM).

This sequence belongs to the KdpC family. In terms of assembly, the system is composed of three essential subunits: KdpA, KdpB and KdpC.

It is found in the cell inner membrane. Functionally, part of the high-affinity ATP-driven potassium transport (or Kdp) system, which catalyzes the hydrolysis of ATP coupled with the electrogenic transport of potassium into the cytoplasm. This subunit acts as a catalytic chaperone that increases the ATP-binding affinity of the ATP-hydrolyzing subunit KdpB by the formation of a transient KdpB/KdpC/ATP ternary complex. This Burkholderia cenocepacia (strain HI2424) protein is Potassium-transporting ATPase KdpC subunit.